The sequence spans 390 residues: Fer-related kinase 1 (390 aa).

Residues 23–119 enclose the SH2 domain; sequence YYHGMVPRQD…ASGAKIRRPM (97 aa). Positions 131–386 constitute a Protein kinase domain; it reads IVANKKLGEG…SIHKKLREFY (256 aa). ATP contacts are provided by residues 137–145 and K161; that span reads LGEGAFGDV. D252 functions as the Proton acceptor in the catalytic mechanism.

It belongs to the protein kinase superfamily. Tyr protein kinase family. Fes/fps subfamily. In terms of assembly, interacts with hmp-2. Requires Mn(2+) as cofactor.

Its subcellular location is the nucleus. It localises to the cytoplasm. The protein localises to the cell junction. It is found in the cell membrane. It carries out the reaction L-tyrosyl-[protein] + ATP = O-phospho-L-tyrosyl-[protein] + ADP + H(+). Functionally, non-receptor tyrosine-protein kinase which plays a role in morphogenesis by regulating the epidermal enclosure of the embryo, independently of its kinase activity. Prevents hyperactivation of the Wnt signaling pathway during endoderm development, probably by preventing hmp-2 nuclear translocation. The chain is Fer-related kinase 1 from Caenorhabditis elegans.